A 185-amino-acid polypeptide reads, in one-letter code: Ribosome-recycling factor (185 aa).

It belongs to the RRF family.

The protein resides in the cytoplasm. In terms of biological role, responsible for the release of ribosomes from messenger RNA at the termination of protein biosynthesis. May increase the efficiency of translation by recycling ribosomes from one round of translation to another. The sequence is that of Ribosome-recycling factor from Aliivibrio fischeri (strain ATCC 700601 / ES114) (Vibrio fischeri).